Here is a 446-residue protein sequence, read N- to C-terminus: ATP-dependent protease ATPase subunit HslU (446 aa).

Residues Ile18, 60–65, Asp259, Glu324, and Arg396 each bind ATP; that span reads GVGKTE.

It belongs to the ClpX chaperone family. HslU subfamily. As to quaternary structure, a double ring-shaped homohexamer of HslV is capped on each side by a ring-shaped HslU homohexamer. The assembly of the HslU/HslV complex is dependent on binding of ATP.

The protein resides in the cytoplasm. In terms of biological role, ATPase subunit of a proteasome-like degradation complex; this subunit has chaperone activity. The binding of ATP and its subsequent hydrolysis by HslU are essential for unfolding of protein substrates subsequently hydrolyzed by HslV. HslU recognizes the N-terminal part of its protein substrates and unfolds these before they are guided to HslV for hydrolysis. This chain is ATP-dependent protease ATPase subunit HslU, found in Vibrio atlanticus (strain LGP32) (Vibrio splendidus (strain Mel32)).